The primary structure comprises 515 residues: Cytosolic Fe-S cluster assembly factor NAR1 homolog (515 aa).

Residues cysteine 19, cysteine 65, cysteine 68, cysteine 71, cysteine 192, cysteine 247, cysteine 428, and cysteine 432 each contribute to the [4Fe-4S] cluster site.

The protein belongs to the NARF family.

Its function is as follows. Component of the cytosolic Fe/S protein assembly machinery. Required for maturation of extramitochondrial Fe/S proteins. May play a role in the transfer of pre-assembled Fe/S clusters to target apoproteins. This chain is Cytosolic Fe-S cluster assembly factor NAR1 homolog, found in Schizosaccharomyces japonicus (strain yFS275 / FY16936) (Fission yeast).